The primary structure comprises 131 residues: D-ribose pyranase (131 aa).

Histidine 20 (proton donor) is an active-site residue. Substrate-binding positions include aspartate 28, histidine 98, and tyrosine 120–asparagine 122.

The protein belongs to the RbsD / FucU family. RbsD subfamily. As to quaternary structure, homodecamer.

It is found in the cytoplasm. It catalyses the reaction beta-D-ribopyranose = beta-D-ribofuranose. Its pathway is carbohydrate metabolism; D-ribose degradation; D-ribose 5-phosphate from beta-D-ribopyranose: step 1/2. Functionally, catalyzes the interconversion of beta-pyran and beta-furan forms of D-ribose. This chain is D-ribose pyranase, found in Bacillus velezensis (strain DSM 23117 / BGSC 10A6 / LMG 26770 / FZB42) (Bacillus amyloliquefaciens subsp. plantarum).